The primary structure comprises 181 residues: MTDKSDRTDWVALMRAIRDHRDEAAFAELFQHFAPKVKGFLMKSGSVASQAEECAQDVMATVWQKAHLFDPSRASVATWIFTIARNRRIDGLRKDRQPEPEDLFWGPDSEPDQADVYEMQQENARLGRAIARLPEAQRALIERAFFGDLTHRELAAETGLPLGTIKSRIRLALDRLRQHMS.

The sigma-70 factor domain-2 stretch occupies residues 29–96 (LFQHFAPKVK…RRIDGLRKDR (68 aa)). Positions 53–56 (ECAQ) match the Interaction with polymerase core subunit RpoC motif. The sigma-70 factor domain-4 stretch occupies residues 129–178 (AIARLPEAQRALIERAFFGDLTHRELAAETGLPLGTIKSRIRLALDRLRQ). A DNA-binding region (H-T-H motif) is located at residues 151 to 170 (HRELAAETGLPLGTIKSRIR).

It belongs to the sigma-70 factor family. ECF subfamily. As to quaternary structure, interacts transiently with the RNA polymerase catalytic core formed by RpoA, RpoB, RpoC and RpoZ (2 alpha, 1 beta, 1 beta' and 1 omega subunit) to form the RNA polymerase holoenzyme that can initiate transcription. Forms a 1:1 complex (via sigma-70 factor domain 4) with anti-sigma factor ChrR; this inhibits the interaction of RpoE with the RNA polymerase catalytic core.

Its function is as follows. Sigma factors are initiation factors that promote the attachment of RNA polymerase to specific initiation sites and are then released. Extracytoplasmic function (ECF) sigma factors are held in an inactive form by a cognate anti-sigma factor until released. Sigma-E controls a transcriptional response to singlet oxygen, a by-product of photosynthesis; its continuous activity requires constant exposure to singlet oxygen. The regulon has about 180 genes that protect against or repair damage induced by singlet oxygen, including itself and rpoH2, a heat shock-responsive sigma factor. This Cereibacter sphaeroides (strain ATCC 17023 / DSM 158 / JCM 6121 / CCUG 31486 / LMG 2827 / NBRC 12203 / NCIMB 8253 / ATH 2.4.1.) (Rhodobacter sphaeroides) protein is ECF RNA polymerase sigma factor RpoE (rpoE).